Reading from the N-terminus, the 453-residue chain is MQDTTLKKIIQDKSEWIRLRKEKQPLIDFKDKINKKTRDFYHSLKEKKPCFILEYKKKSPSLGIIRNNFNLIEISNVYKKYASSVSVLTDEKYFHGNLNFINIVRECVSQPVLCKDFFIDPYQVYLSRYYNADAILLMLSVLNDIQYKELSIIAKKLNMGILTEVNNIEELKRALKLNANIIGINNRNLHDLSIDLNRTRTLSSLIKKDTIIISESGIKKYREIKELSKFVNGFLIGSHLMSQTNLETAVRSIIFGDNKVCGLTRSIDIEVSEKYGAIYGGLIFVKNSPRYITKKTAKNISINRKLKLIGIFQNENINIIVDIAEELSLYGVQLHGQENKQYIDKLRNILPKKINIWKAFSIQSELPDRNWDNVNMYIFDSDSGGSNTSFNWSILNHHILDNVILAGGINLKNCITASKLKCSGLDLNSGVEISPGIKDYKKIKSIFQKLRYG.

Positions 1–257 are indole-3-glycerol phosphate synthase; that stretch reads MQDTTLKKII…TAVRSIIFGD (257 aa). The N-(5'-phosphoribosyl)anthranilate isomerase stretch occupies residues 258–453; the sequence is NKVCGLTRSI…KSIFQKLRYG (196 aa).

The protein in the N-terminal section; belongs to the TrpC family. It in the C-terminal section; belongs to the TrpF family. As to quaternary structure, monomer.

It carries out the reaction N-(5-phospho-beta-D-ribosyl)anthranilate = 1-(2-carboxyphenylamino)-1-deoxy-D-ribulose 5-phosphate. It catalyses the reaction 1-(2-carboxyphenylamino)-1-deoxy-D-ribulose 5-phosphate + H(+) = (1S,2R)-1-C-(indol-3-yl)glycerol 3-phosphate + CO2 + H2O. Its pathway is amino-acid biosynthesis; L-tryptophan biosynthesis; L-tryptophan from chorismate: step 3/5. The protein operates within amino-acid biosynthesis; L-tryptophan biosynthesis; L-tryptophan from chorismate: step 4/5. Bifunctional enzyme that catalyzes two sequential steps of tryptophan biosynthetic pathway. The first reaction is catalyzed by the isomerase, coded by the TrpF domain; the second reaction is catalyzed by the synthase, coded by the TrpC domain. In Buchnera aphidicola subsp. Acyrthosiphon pisum (strain APS) (Acyrthosiphon pisum symbiotic bacterium), this protein is Tryptophan biosynthesis protein TrpCF (trpC).